We begin with the raw amino-acid sequence, 139 residues long: Putative pre-16S rRNA nuclease (139 aa).

The protein belongs to the YqgF nuclease family.

It is found in the cytoplasm. Functionally, could be a nuclease involved in processing of the 5'-end of pre-16S rRNA. This chain is Putative pre-16S rRNA nuclease, found in Haemophilus influenzae (strain 86-028NP).